Reading from the N-terminus, the 670-residue chain is Kinesin-like protein KIF2B (670 aa).

A Phosphothreonine; by PLK1 modification is found at T122. The stretch at 146–173 (CLQEIEKVQKQREKRRRLQQEIRARRAL) forms a coiled coil. S201 is modified (phosphoserine; by PLK1). Residues 210 to 540 (RICVCVRKRP…LRYANRVKEL (331 aa)) form the Kinesin motor domain. 300 to 307 (GQTGSGKT) serves as a coordination point for ATP.

This sequence belongs to the TRAFAC class myosin-kinesin ATPase superfamily. Kinesin family. MCAK/KIF2 subfamily. Phosphorylation at Thr-122 by PLK1 is required for activity in the correction of kinetochore-microtubules attachment errors, while phosphorylation at Ser-201 also by PLK1 is required for the kinetochore localization and activity in prometaphase.

The protein resides in the cytoplasm. The protein localises to the cytoskeleton. Its subcellular location is the microtubule organizing center. It localises to the centrosome. It is found in the spindle. The protein resides in the chromosome. The protein localises to the centromere. Its subcellular location is the kinetochore. Its function is as follows. Plus end-directed microtubule-dependent motor required for spindle assembly and chromosome movement during mitosis. Has microtubule depolymerization activity. Plays a role in chromosome congression. The chain is Kinesin-like protein KIF2B (KIF2B) from Macaca fascicularis (Crab-eating macaque).